The following is a 255-amino-acid chain: MWLLLPLSFLLTSTAQDGGKLLEGEECAPHSQPWQVALYERGRFNCGASLISPHWVLSAAHCQSRFMRVRLGEHNLRKRDGPEQLRTASRVIPHPRYEARSHRHDIMLLRLVQPARLTPQVRPVVLPTRCPHPGEACVVSGWGLVSHNEPGTTGRPQSQVSLPDTLHCANISIISDASCDKNYPGRLTNTMVCAGAEGRGAESCEGDSGGPLVCGGILQGIVSWGDVPCDNTTKPGVYTKVCRYVKWIRETMKRN.

A signal peptide spans 1–15 (MWLLLPLSFLLTSTA). Residues 16–20 (QDGGK) constitute a propeptide, activation peptide. The segment at 21–253 (LLEGEECAPH…YVKWIRETMK (233 aa)) is serine protease. C46 and C62 are disulfide-bonded. Residues H61 and D105 each act as charge relay system in the active site. Cystine bridges form between C137/C214, C179/C193, and C204/C229. N170 carries N-linked (GlcNAc...) asparagine glycosylation. Residue S208 is the Charge relay system of the active site. Residue N231 is glycosylated (N-linked (GlcNAc...) asparagine).

It belongs to the peptidase S1 family. Kallikrein subfamily.

Its subcellular location is the secreted. Its function is as follows. Protease whose physiological substrate is not yet known. This Saguinus oedipus (Cotton-top tamarin) protein is Kallikrein-15 (KLK15).